A 141-amino-acid polypeptide reads, in one-letter code: Large ribosomal subunit protein uL22c (141 aa).

Belongs to the universal ribosomal protein uL22 family. In terms of assembly, part of the 50S ribosomal subunit.

It is found in the plastid. It localises to the chloroplast. This protein binds specifically to 23S rRNA. Its function is as follows. The globular domain of the protein is located near the polypeptide exit tunnel on the outside of the subunit, while an extended beta-hairpin is found that lines the wall of the exit tunnel in the center of the 70S ribosome. The chain is Large ribosomal subunit protein uL22c (rpl22) from Chloranthus spicatus (Chulantree).